Reading from the N-terminus, the 360-residue chain is Peptide chain release factor 1 (360 aa).

Position 237 is an N5-methylglutamine (Gln237).

It belongs to the prokaryotic/mitochondrial release factor family. Post-translationally, methylated by PrmC. Methylation increases the termination efficiency of RF1.

It is found in the cytoplasm. Its function is as follows. Peptide chain release factor 1 directs the termination of translation in response to the peptide chain termination codons UAG and UAA. The protein is Peptide chain release factor 1 of Pseudomonas putida (strain ATCC 700007 / DSM 6899 / JCM 31910 / BCRC 17059 / LMG 24140 / F1).